The chain runs to 153 residues: MAL-like protein (153 aa).

4 consecutive transmembrane segments (helical) span residues 22–42 (LFLT…FLVW), 59–79 (VMYV…SYLF), 97–117 (GTTG…TIVS), and 131–151 (AASF…FSIY). The region spanning 22 to 153 (LFLTIPFAFF…ILHAFSIYYH (132 aa)) is the MARVEL domain.

Belongs to the MAL family.

The protein localises to the membrane. In Homo sapiens (Human), this protein is MAL-like protein (MALL).